The following is a 226-amino-acid chain: Respiratory nitrate reductase 2 gamma chain (226 aa).

At 1–4 the chain is on the periplasmic side; it reads MIQY. The helical transmembrane segment at 5–30 threads the bilayer; the sequence is LNVFFYDIYPYICATVFFLGSWLRYD. Residues 31-48 are Cytoplasmic-facing; sequence YGQYTWRASSSQMLDKRG. The helical transmembrane segment at 49–71 threads the bilayer; the sequence is MVIWSNLFHIGILGIFFGHLFGM. Positions 57 and 67 each coordinate heme b. Topologically, residues 72 to 83 are periplasmic; the sequence is LTPHWMYAWFLP. A helical transmembrane segment spans residues 84–113; the sequence is VAAKQLMAMVLGGICGVLTLIGGAGLLWRR. Topologically, residues 114–125 are cytoplasmic; sequence LTNQRVRATSTT. A helical membrane pass occupies residues 126 to 149; the sequence is PDIIIMSILLIQCLLGLSTIPFSA. Topologically, residues 150–183 are periplasmic; sequence QYPDGSEMMKLVGWAQSIVTFRGGSSEMLNGVAF. Residues 184–199 traverse the membrane as a helical segment; sequence VFRLHLVLGMTIFLLF. Heme b is bound by residues H188 and H206. At 200-226 the chain is on the cytoplasmic side; sequence PFTRLVHVWSAPFEYFTRRYQIVRSRR.

As to quaternary structure, dimer of heterotrimers each composed of an alpha, a beta and a gamma chain. Alpha and beta are catalytic chains; gamma chains are involved in binding the enzyme complex to the cytoplasmic membrane. Heme is required as a cofactor.

Its subcellular location is the cell inner membrane. The catalysed reaction is nitrate + a quinol = a quinone + nitrite + H2O. This is a second nitrate reductase enzyme which can substitute for the NRA enzyme and allows E.coli to use nitrate as an electron acceptor during anaerobic growth. The gamma chain is a membrane-embedded heme-iron unit resembling cytochrome b, which transfers electrons from quinones to the beta subunit. This chain is Respiratory nitrate reductase 2 gamma chain (narV), found in Escherichia coli (strain K12).